The sequence spans 680 residues: UvrABC system protein B (680 aa).

One can recognise a Helicase ATP-binding domain in the interval 27 to 192 (SNIEAGVTDQ…ERNDYDFHRG (166 aa)). 40-47 (GVTGSGKT) contacts ATP. Residues 93 to 116 (YYDYYQPEAYVPSSDTYIEKDSSI) carry the Beta-hairpin motif. The Helicase C-terminal domain occupies 432–594 (QVDDLLGECR…IVPATIRKAV (163 aa)). Positions 637–672 (AKQIQQLERDMREAAKELEFERAAELRDRIRLLREH) constitute a UVR domain.

The protein belongs to the UvrB family. Forms a heterotetramer with UvrA during the search for lesions. Interacts with UvrC in an incision complex.

The protein localises to the cytoplasm. The UvrABC repair system catalyzes the recognition and processing of DNA lesions. A damage recognition complex composed of 2 UvrA and 2 UvrB subunits scans DNA for abnormalities. Upon binding of the UvrA(2)B(2) complex to a putative damaged site, the DNA wraps around one UvrB monomer. DNA wrap is dependent on ATP binding by UvrB and probably causes local melting of the DNA helix, facilitating insertion of UvrB beta-hairpin between the DNA strands. Then UvrB probes one DNA strand for the presence of a lesion. If a lesion is found the UvrA subunits dissociate and the UvrB-DNA preincision complex is formed. This complex is subsequently bound by UvrC and the second UvrB is released. If no lesion is found, the DNA wraps around the other UvrB subunit that will check the other stand for damage. The chain is UvrABC system protein B from Nitratidesulfovibrio vulgaris (strain DSM 19637 / Miyazaki F) (Desulfovibrio vulgaris).